The primary structure comprises 240 residues: Phosphatidylserine decarboxylase proenzyme (240 aa).

Catalysis depends on Ser209, which acts as the Schiff-base intermediate with substrate; via pyruvic acid. Ser209 carries the pyruvic acid (Ser); by autocatalysis modification.

Belongs to the phosphatidylserine decarboxylase family. PSD-A subfamily. Heterodimer of a large membrane-associated beta subunit and a small pyruvoyl-containing alpha subunit. It depends on pyruvate as a cofactor. Post-translationally, is synthesized initially as an inactive proenzyme. Formation of the active enzyme involves a self-maturation process in which the active site pyruvoyl group is generated from an internal serine residue via an autocatalytic post-translational modification. Two non-identical subunits are generated from the proenzyme in this reaction, and the pyruvate is formed at the N-terminus of the alpha chain, which is derived from the carboxyl end of the proenzyme. The post-translation cleavage follows an unusual pathway, termed non-hydrolytic serinolysis, in which the side chain hydroxyl group of the serine supplies its oxygen atom to form the C-terminus of the beta chain, while the remainder of the serine residue undergoes an oxidative deamination to produce ammonia and the pyruvoyl prosthetic group on the alpha chain.

Its subcellular location is the cell membrane. It catalyses the reaction a 1,2-diacyl-sn-glycero-3-phospho-L-serine + H(+) = a 1,2-diacyl-sn-glycero-3-phosphoethanolamine + CO2. It functions in the pathway phospholipid metabolism; phosphatidylethanolamine biosynthesis; phosphatidylethanolamine from CDP-diacylglycerol: step 2/2. Catalyzes the formation of phosphatidylethanolamine (PtdEtn) from phosphatidylserine (PtdSer). This chain is Phosphatidylserine decarboxylase proenzyme, found in Mycobacterium marinum (strain ATCC BAA-535 / M).